A 415-amino-acid polypeptide reads, in one-letter code: MKGSYKSRWVIVIVVVIAAIAAFWFWQGRNDSRSAAPGATKQAQQSPAGGRRGMRSGPLAPVQAATAVEQAVPRYLTGLGTITAANTVTVRSRVDGQLIALHFQEGQQVKAGDLLAEIDPSQFKVALAQAQGQLAKDKATLANARRDLARYQQLVKTNLVSRQELDAQQALVSETEGTIKADEASVASAQLQLDWSRITAPVDGRVGLKQVDVGNQISSGDTTGIVVITQTHPIDLVFTLPESDIATVVQAQKAGKPLVVEAWDRTNSKKLSEGTLLSLDNQIDATTGTIKVKARFNNQDDALFPNQFVNARMLVDTEQNAVVIPTAALQMGNEGHFVWVLNSENKVSKHLVTPGIQDSQKVVIRAGISAGDRVVTDGIDRLTEGAKVEVVEAQSATTSEEKATSREYAKKGARS.

The N-terminal stretch at 1–21 (MKGSYKSRWVIVIVVVIAAIA) is a signal peptide. 2 disordered regions span residues 32 to 59 (SRSAAPGATKQAQQSPAGGRRGMRSGPL) and 392 to 415 (EAQSATTSEEKATSREYAKKGARS). The span at 399–415 (SEEKATSREYAKKGARS) shows a compositional bias: basic and acidic residues.

This sequence belongs to the membrane fusion protein (MFP) (TC 8.A.1) family. As to quaternary structure, part of a tripartite efflux system composed of MdtA, MdtB and MdtC.

It is found in the cell inner membrane. In terms of biological role, the MdtABC tripartite complex confers resistance against novobiocin and deoxycholate. This Escherichia coli O17:K52:H18 (strain UMN026 / ExPEC) protein is Multidrug resistance protein MdtA.